Reading from the N-terminus, the 88-residue chain is U24 protein (88 aa).

Position 6 is a phosphothreonine (T6). A PPXY motif motif is present at residues 8–11 (PPSY). The helical transmembrane segment at 58–78 (FAFLVLTGLAIAMILFIAFVI) threads the bilayer.

In terms of assembly, interacts with host ITCH; this interaction probably mediates ITCH degradation. Interacts probably with NEDD4.

It localises to the membrane. Down-regulates the TCR/CD3E complex and the transferrin receptor TFRC in host T-cells by blocking them from recycling back to the cell surface. The sequence is that of U24 protein (U24) from Human herpesvirus 6B (strain Z29) (HHV-6 variant B).